Reading from the N-terminus, the 153-residue chain is 3-hydroxyacyl-[acyl-carrier-protein] dehydratase FabZ (153 aa).

His47 is an active-site residue.

Belongs to the thioester dehydratase family. FabZ subfamily.

It localises to the cytoplasm. It catalyses the reaction a (3R)-hydroxyacyl-[ACP] = a (2E)-enoyl-[ACP] + H2O. Its function is as follows. Involved in unsaturated fatty acids biosynthesis. Catalyzes the dehydration of short chain beta-hydroxyacyl-ACPs and long chain saturated and unsaturated beta-hydroxyacyl-ACPs. The chain is 3-hydroxyacyl-[acyl-carrier-protein] dehydratase FabZ from Dichelobacter nodosus (strain VCS1703A).